A 171-amino-acid chain; its full sequence is Mitochondrial import inner membrane translocase subunit Tim17-A (171 aa).

Cysteine 9 and cysteine 78 are disulfide-bonded. The next 3 membrane-spanning stretches (helical) occupy residues 17 to 37 (CGGAFTMGTIGGGIFQAFKGF), 63 to 77 (GGSFAVWGGLFSTID), and 113 to 133 (VGSAAMGGILLALIEGAGILL). Positions 147-171 (FAEDHSQLPSSQLPSSPFGDYRQYQ) are disordered. Residues 153-163 (QLPSSQLPSSP) show a composition bias toward low complexity.

It belongs to the Tim17/Tim22/Tim23 family. In terms of assembly, component of the TIM23 complex at least composed of TIMM23, TIMM17 (TIMM17A or TIMM17B) and TIMM50. The complex interacts with the TIMM44 component of the PAM complex and with DNAJC15. In terms of processing, degraded by YMEL1 downstream of the integrated stress response (ISR).

Its subcellular location is the mitochondrion inner membrane. Functionally, essential component of the TIM23 complex, a complex that mediates the translocation of transit peptide-containing proteins across the mitochondrial inner membrane. The sequence is that of Mitochondrial import inner membrane translocase subunit Tim17-A (Timm17a) from Rattus norvegicus (Rat).